The chain runs to 367 residues: CCN family member 4 (367 aa).

Residues 1-22 (MRWLLPWTLAAVAVLMVGNILA) form the signal peptide. Residues 45 to 118 (RPEFCKWPCE…RYAIGVCAQV (74 aa)) form the IGFBP N-terminal domain. 4 disulfide bridges follow: cysteine 49–cysteine 73, cysteine 53–cysteine 75, cysteine 55–cysteine 76, and cysteine 62–cysteine 79. Asparagine 86 is a glycosylation site (N-linked (GlcNAc...) asparagine). 2 disulfide bridges follow: cysteine 87–cysteine 101 and cysteine 93–cysteine 115. The 66-residue stretch at 121–186 (VGCVLDGVRY…GQCCEQWVCD (66 aa)) folds into the VWFC domain. Asparagine 143 carries N-linked (GlcNAc...) asparagine glycosylation. The TSP type-1 domain occupies 215–260 (NCIAYTSPWSPCSTTCGLGISTRISNVNARCWPEQESRLCNLRPCD). 5 cysteine pairs are disulfide-bonded: cysteine 273–cysteine 310, cysteine 290–cysteine 324, cysteine 301–cysteine 340, cysteine 304–cysteine 342, and cysteine 309–cysteine 346. The CTCK domain occupies 273-347 (CLAVYQPEEA…NACFCNLSCR (75 aa)). An N-linked (GlcNAc...) asparagine glycan is attached at asparagine 284. Asparagine 343 carries an N-linked (GlcNAc...) asparagine glycan.

The protein belongs to the CCN family.

It is found in the secreted. Functionally, downstream regulator in the Wnt/Frizzled-signaling pathway. Associated with cell survival. Adheres to skin and melanoma fibroblasts. In vitro binding to skin fibroblasts occurs through the proteoglycans, decorin and biglycan. This is CCN family member 4 (Ccn4) from Rattus norvegicus (Rat).